The sequence spans 757 residues: Dynamin-related protein DNM1 (757 aa).

One can recognise a Dynamin-type G domain in the interval 25 to 333 (TLDLPILAVV…LLSHIRDKLP (309 aa)). Residues 35–42 (GSQSSGKS) are G1 motif. Residue 35 to 42 (GSQSSGKS) coordinates GTP. The tract at residues 61–63 (VTR) is G2 motif. Residues 175 to 178 (DLPG) are G3 motif. GTP is bound by residues 175–179 (DLPGI) and 244–247 (TKLD). Positions 244 to 247 (TKLD) are G4 motif. Residues 274–277 (VNRS) form a G5 motif region. The disordered stretch occupies residues 557–597 (SKLSQQENGQTNGINGTSSISSNIDQDSAKNSDYDDDGIDA). The span at 567 to 580 (TNGINGTSSISSNI) shows a compositional bias: low complexity. A Phosphoserine modification is found at serine 629. One can recognise a GED domain in the interval 670–757 (CELIKRLIVS…KAATLISNIL (88 aa)).

The protein belongs to the TRAFAC class dynamin-like GTPase superfamily. Dynamin/Fzo/YdjA family. As to quaternary structure, interacts with FIS1 and MDV1.

The protein resides in the mitochondrion outer membrane. It catalyses the reaction GTP + H2O = GDP + phosphate + H(+). Functionally, microtubule-associated force-producing protein that participates mitochondrial fission. Fission of mitochondria occurs in many cell types and constitutes an important step in mitochondria morphology, which is balanced between fusion and fission. Functions antagonistically with FZO1. This Saccharomyces cerevisiae (strain ATCC 204508 / S288c) (Baker's yeast) protein is Dynamin-related protein DNM1 (DNM1).